The sequence spans 127 residues: Small ribosomal subunit protein uS11 (127 aa).

The protein belongs to the universal ribosomal protein uS11 family. In terms of assembly, part of the 30S ribosomal subunit. Interacts with proteins S7 and S18. Binds to IF-3.

Located on the platform of the 30S subunit, it bridges several disparate RNA helices of the 16S rRNA. Forms part of the Shine-Dalgarno cleft in the 70S ribosome. The protein is Small ribosomal subunit protein uS11 of Lactococcus lactis subsp. lactis (strain IL1403) (Streptococcus lactis).